The following is a 487-amino-acid chain: 1,4-beta-D-glucan cellobiohydrolase CEL6A (487 aa).

The first 17 residues, 1 to 17 (MASKLFLAAALLQGALS), serve as a signal peptide directing secretion. One can recognise a CBM1 domain in the interval 27 to 63 (ACAAQWGQCGGQDYTGPTCCQSGSTCVVSNQWYSQCL). 2 cysteine pairs are disulfide-bonded: Cys35–Cys52 and Cys46–Cys62. The segment covering 64-117 (PGSSNPTTTSRTSTSSSSSTSRTSSSTSRPPSSVPTTPTSVPPTITTTPTTTPT) has biased composition (low complexity). Residues 64-127 (PGSSNPTTTS…GGSGPGTTAS (64 aa)) are disordered. Trp175 and Asp177 together coordinate substrate. Asp216 is an active-site residue. Asp262 acts as the Proton donor in catalysis. His307, Trp310, Asn346, Trp407, Lys435, and Glu439 together coordinate substrate. The active-site Proton acceptor is Asp441.

It belongs to the glycosyl hydrolase 6 (cellulase B) family.

The protein resides in the secreted. The catalysed reaction is Hydrolysis of (1-&gt;4)-beta-D-glucosidic linkages in cellulose and cellotetraose, releasing cellobiose from the non-reducing ends of the chains.. In terms of biological role, exoglucanase that plays an important function in biomass degradation by catalyzing the hydrolysis of the non-reducing end beta-1,4-glucosidic linkages in cellulose and cellotetraose to release cellobiose. Shows higher hydrolytic activities on phosphoric acid-swollen cellulose (PSC), beta-glucan, and cellooligosaccharide derivatives than on cellulose, of which the best substrates were cellooligosaccharides. The chain is 1,4-beta-D-glucan cellobiohydrolase CEL6A from Pyricularia oryzae (strain 70-15 / ATCC MYA-4617 / FGSC 8958) (Rice blast fungus).